The following is a 169-amino-acid chain: Sulfopyruvate decarboxylase subunit alpha (169 aa).

This sequence belongs to the ComD family. Heterododecamer composed of 6 subunits alpha and 6 subunits beta.

It catalyses the reaction 3-sulfopyruvate + H(+) = sulfoacetaldehyde + CO2. It functions in the pathway cofactor biosynthesis; coenzyme M biosynthesis; sulfoacetaldehyde from phosphoenolpyruvate and sulfite: step 4/4. Its activity is regulated as follows. Inhibited by oxygen when heated in air at 80 degrees Celsius. The enzyme is reactivated by addition of dithionite. In terms of biological role, involved in the biosynthesis of the coenzyme M (2-mercaptoethanesulfonic acid). Catalyzes the decarboxylation of sulfopyruvate to sulfoacetaldehyde. The chain is Sulfopyruvate decarboxylase subunit alpha from Methanocaldococcus jannaschii (strain ATCC 43067 / DSM 2661 / JAL-1 / JCM 10045 / NBRC 100440) (Methanococcus jannaschii).